Consider the following 325-residue polypeptide: MSETATWQPSASIPNLLKRAAIMAEIRRFFADRGVLEVETPCMSQATVTDIHLFPFETRFVGPGHSQGMNLYLMTSPEYHMKRLLAAGCGPVFQLCRSFRNEEMGRHHNPEFTMLEWYRPHYDMYRLMNEVDDLLQQVLDCQPAESLSYQQAFQRHLEIDPLSADKTQLREAAAKLDLSNIADTEEDRDTLLQLLFTMGVEPHIGKEKPTFIYHFPASQASLAQISTEDHRVAERFEVYYKGIELANGFHELTDAREQQQRFEQDNRKRAARGLPQQPIDQNLLDALAAGLPDCSGVALGVDRLVMLALGAESLADVIAFTVDRA.

Position 76-78 (76-78 (SPE)) interacts with substrate. ATP contacts are provided by residues 100–102 (RNE) and Asn109. Tyr118 lines the substrate pocket. 244–245 (EL) lines the ATP pocket. Glu251 contacts substrate. Gly300 contacts ATP.

The protein belongs to the class-II aminoacyl-tRNA synthetase family. EpmA subfamily. As to quaternary structure, homodimer.

It carries out the reaction D-beta-lysine + L-lysyl-[protein] + ATP = N(6)-((3R)-3,6-diaminohexanoyl)-L-lysyl-[protein] + AMP + diphosphate + H(+). In terms of biological role, with EpmB is involved in the beta-lysylation step of the post-translational modification of translation elongation factor P (EF-P) on 'Lys-34'. Catalyzes the ATP-dependent activation of (R)-beta-lysine produced by EpmB, forming a lysyl-adenylate, from which the beta-lysyl moiety is then transferred to the epsilon-amino group of EF-P 'Lys-34'. The sequence is that of Elongation factor P--(R)-beta-lysine ligase from Salmonella choleraesuis (strain SC-B67).